We begin with the raw amino-acid sequence, 440 residues long: Streptokinase G (440 aa).

The signal sequence occupies residues 1–26 (MKNYLSFGMFALLFALTFGTVNSVQA).

In terms of biological role, this protein is not a protease, but it activates plasminogen by complexing with it. As a potential virulence factor, it is thought to prevent the formation of effective fibrin barriers around the site of infection, thereby contributing to the invasiveness of the cells. The protein is Streptokinase G (skg) of Streptococcus sp. (strain 19909).